Consider the following 205-residue polypeptide: Guanylate kinase (205 aa).

The 181-residue stretch at 3 to 183 (GFVLLISGPS…SYEALRAILI (181 aa)) folds into the Guanylate kinase-like domain. 10-17 (GPSGAGKS) serves as a coordination point for ATP.

It belongs to the guanylate kinase family.

The protein localises to the cytoplasm. The enzyme catalyses GMP + ATP = GDP + ADP. Functionally, essential for recycling GMP and indirectly, cGMP. In Campylobacter jejuni (strain RM1221), this protein is Guanylate kinase.